Reading from the N-terminus, the 419-residue chain is Transcription termination factor Rho (419 aa).

A Rho RNA-BD domain is found at 48-123 (EISGDGVLEI…LKVDTINFDR (76 aa)). RNA-binding regions lie at residues 61-66 (GFGFLR), 78-80 (DIY), and 108-110 (ERY). Residues 169-174 (GKGQRG), 181-186 (KAGKTI), and Arg-212 each bind ATP. Residues 284 to 288 (VLTGG) are RNA-binding 2.

Belongs to the Rho family. As to quaternary structure, homohexamer. The homohexamer assembles into an open ring structure.

Facilitates transcription termination by a mechanism that involves Rho binding to the nascent RNA, activation of Rho's RNA-dependent ATPase activity, and release of the mRNA from the DNA template. In Pseudomonas fluorescens biotype C, this protein is Transcription termination factor Rho.